A 242-amino-acid polypeptide reads, in one-letter code: Venom nerve growth factor (242 aa).

An N-terminal signal peptide occupies residues 1-18 (MSMMCYTLIIAFLIGIWA). A propeptide spanning residues 19-125 (APKSEDNVPL…TLNRNIRAKR (107 aa)) is cleaved from the precursor. Basic and acidic residues predominate over residues 47-66 (GLKTSRNTDQRHPAPKKAED). Positions 47 to 70 (GLKTSRNTDQRHPAPKKAEDQELG) are disordered. 3 cysteine pairs are disulfide-bonded: cysteine 139–cysteine 203, cysteine 181–cysteine 231, and cysteine 191–cysteine 233. N-linked (GlcNAc...) asparagine glycosylation occurs at asparagine 166.

It belongs to the NGF-beta family. Homodimer; non-covalently linked. Expressed by the venom gland.

The protein resides in the secreted. Functionally, nerve growth factor is important for the development and maintenance of the sympathetic and sensory nervous systems. It stimulates division and differentiation of sympathetic and embryonic sensory neurons as well as basal forebrain cholinergic neurons in the brain. Its relevance in the snake venom is not clear. However, it has been shown to inhibit metalloproteinase-dependent proteolysis of platelet glycoprotein Ib alpha, suggesting a metalloproteinase inhibition to prevent metalloprotease autodigestion and/or protection against prey proteases. Binds a lipid between the two protein chains in the homodimer. The lipid-bound form promotes histamine relase from mouse mast cells, contrary to the lipid-free form. This Drysdalia coronoides (White-lipped snake) protein is Venom nerve growth factor.